The chain runs to 133 residues: p53 and DNA damage-regulated protein 1 (133 aa).

Belongs to the prefoldin subunit beta family. As to quaternary structure, component of the PAQosome complex which is responsible for the biogenesis of several protein complexes and which consists of R2TP complex members RUVBL1, RUVBL2, RPAP3 and PIH1D1, URI complex members PFDN2, PFDN6, PDRG1, UXT and URI1 as well as ASDURF, POLR2E and DNAAF10/WDR92.

The protein resides in the cytoplasm. Its function is as follows. May play a role in chaperone-mediated protein folding. The sequence is that of p53 and DNA damage-regulated protein 1 (PDRG1) from Pongo abelii (Sumatran orangutan).